A 444-amino-acid chain; its full sequence is Multidrug resistance protein MdtA (444 aa).

An N-terminal signal peptide occupies residues 1 to 20; it reads MKSQSKRTSRLFVFVGGVVA. The span at 37-52 shows a compositional bias: polar residues; the sequence is NNTSGAQQSARGQDTS. Disordered regions lie at residues 37–60 and 398–444; these read NNTS…RNTP and TPRS…AEKS. The segment covering 406–419 has biased composition (low complexity); that stretch reads ANPASAEKAAAEAE. The span at 435-444 shows a compositional bias: polar residues; the sequence is ARSTTAAEKS.

Belongs to the membrane fusion protein (MFP) (TC 8.A.1) family. In terms of assembly, part of a tripartite efflux system composed of MdtA, MdtB and MdtC.

The protein resides in the cell inner membrane. The sequence is that of Multidrug resistance protein MdtA from Yersinia pseudotuberculosis serotype O:1b (strain IP 31758).